The sequence spans 176 residues: Isopentenyl-diphosphate Delta-isomerase (176 aa).

Positions 23 and 29 each coordinate Mn(2+). Residues 27–161 enclose the Nudix hydrolase domain; the sequence is LRHLAISVFV…PERFTPWLKI (135 aa). Residue C63 is part of the active site. Mg(2+) is bound at residue C63. H65 provides a ligand contact to Mn(2+). Residue E83 coordinates Mg(2+). Mn(2+) contacts are provided by E109 and E111. Residue E111 is part of the active site.

Belongs to the IPP isomerase type 1 family. Requires Mg(2+) as cofactor. Mn(2+) is required as a cofactor.

Its subcellular location is the cytoplasm. It carries out the reaction isopentenyl diphosphate = dimethylallyl diphosphate. The protein operates within isoprenoid biosynthesis; dimethylallyl diphosphate biosynthesis; dimethylallyl diphosphate from isopentenyl diphosphate: step 1/1. Its pathway is porphyrin-containing compound metabolism; chlorophyll biosynthesis. Catalyzes the 1,3-allylic rearrangement of the homoallylic substrate isopentenyl (IPP) to its highly electrophilic allylic isomer, dimethylallyl diphosphate (DMAPP). The protein is Isopentenyl-diphosphate Delta-isomerase of Rhodobacter capsulatus (strain ATCC BAA-309 / NBRC 16581 / SB1003).